The following is a 513-amino-acid chain: E3 ubiquitin-protein ligase XBAT33 (513 aa).

ANK repeat units follow at residues 44 to 73 (GLNS…DVNS), 77 to 106 (CGQT…NVTR), 111 to 140 (AGRT…PSDK), 171 to 200 (GGIT…NVSA), and 214 to 244 (AGST…KMTL). The RING-type zinc finger occupies 312–362 (CAVCLERTCTVAAEGCEHQLCVRCALYLCSSSNVPSVTVGPPGSIPCPLCR). 2 disordered regions span residues 397–417 (DTTD…SKTR) and 455–483 (HGTE…EEGQ). Composition is skewed to basic and acidic residues over residues 455 to 466 (HGTERHSEEHVE) and 474 to 483 (TEQEKIEEGQ).

The enzyme catalyses S-ubiquitinyl-[E2 ubiquitin-conjugating enzyme]-L-cysteine + [acceptor protein]-L-lysine = [E2 ubiquitin-conjugating enzyme]-L-cysteine + N(6)-ubiquitinyl-[acceptor protein]-L-lysine.. It participates in protein modification; protein ubiquitination. Possesses E3 ubiquitin-protein ligase activity when associated with the E2 enzyme UBC8 in vitro. This chain is E3 ubiquitin-protein ligase XBAT33 (XBAT33), found in Arabidopsis thaliana (Mouse-ear cress).